Consider the following 78-residue polypeptide: Small ribosomal subunit protein uS17 (78 aa).

The protein belongs to the universal ribosomal protein uS17 family. In terms of assembly, part of the 30S ribosomal subunit.

In terms of biological role, one of the primary rRNA binding proteins, it binds specifically to the 5'-end of 16S ribosomal RNA. The protein is Small ribosomal subunit protein uS17 of Sinorhizobium medicae (strain WSM419) (Ensifer medicae).